Consider the following 512-residue polypeptide: Protein disulfide-isomerase (512 aa).

The signal sequence occupies residues 1 to 24 (MAKNVAIFGLLFSLLLLVPSQIFA). The Thioredoxin 1 domain occupies 25–144 (EESSTDAKEF…IVEYLKKQSG (120 aa)). Catalysis depends on nucleophile residues C62 and C65. C62 and C65 are oxidised to a cystine. N278 carries N-linked (GlcNAc...) asparagine glycosylation. The Thioredoxin 2 domain maps to 357-485 (YKDGKVEPFV…IIEFIEKNKD (129 aa)). Active-site nucleophile residues include C407 and C410. The cysteines at positions 407 and 410 are disulfide-linked. Residues 487–496 (TGAAHQEVEQ) are compositionally biased toward basic and acidic residues. Positions 487 to 512 (TGAAHQEVEQPKAAAQPEAEQPKDEL) are disordered. A Prevents secretion from ER motif is present at residues 509-512 (KDEL).

This sequence belongs to the protein disulfide isomerase family.

It is found in the endoplasmic reticulum lumen. It carries out the reaction Catalyzes the rearrangement of -S-S- bonds in proteins.. In terms of biological role, participates in the folding of proteins containing disulfide bonds, may be involved in glycosylation, prolyl hydroxylation and triglyceride transfer. The sequence is that of Protein disulfide-isomerase (PDI) from Medicago sativa (Alfalfa).